The following is a 204-amino-acid chain: Guanylate kinase (204 aa).

The Guanylate kinase-like domain occupies 18–196 (PKLFTISAPA…SYEVLKSIFI (179 aa)). 25–32 (APAGAGKT) lines the ATP pocket.

It belongs to the guanylate kinase family.

Its subcellular location is the cytoplasm. It catalyses the reaction GMP + ATP = GDP + ADP. Functionally, essential for recycling GMP and indirectly, cGMP. In Chlamydia abortus (strain DSM 27085 / S26/3) (Chlamydophila abortus), this protein is Guanylate kinase.